A 452-amino-acid polypeptide reads, in one-letter code: Protein EARLY-RESPONSIVE TO DEHYDRATION 7, chloroplastic (452 aa).

The span at 1 to 18 (MESSGDKQTSSLYPTVDT) shows a compositional bias: polar residues. Residues 1–28 (MESSGDKQTSSLYPTVDTSNPEAPINPS) constitute a chloroplast transit peptide. The segment at 1–37 (MESSGDKQTSSLYPTVDTSNPEAPINPSSSSSTNNLY) is disordered. The span at 19–37 (SNPEAPINPSSSSSTNNLY) shows a compositional bias: low complexity. The region spanning 258-426 (IATGSGHLIK…AWVAFKIRKA (169 aa)) is the Senescence domain.

Its subcellular location is the plastid. The protein resides in the chloroplast. The protein is Protein EARLY-RESPONSIVE TO DEHYDRATION 7, chloroplastic of Arabidopsis thaliana (Mouse-ear cress).